The sequence spans 718 residues: Cyclomaltodextrin glucanotransferase (718 aa).

The first 34 residues, 1-34 (MFQMAKRVLLSTTLTFSLLAGSALPFLPASAIYA), serve as a signal peptide directing secretion. An A1 region spans residues 35–172 (DADTAVTNKQ…GIKIIIDFAP (138 aa)). Ca(2+)-binding residues include D61, N63, N66, and N67. C77 and C84 form a disulfide bridge. Ca(2+) is bound by residues G85 and D87. 134–135 (YW) provides a ligand contact to substrate. N173 lines the Ca(2+) pocket. The interval 173–236 (NHTSPAMETD…NLYDLADLNH (64 aa)) is b. Position 174 (H174) interacts with substrate. I224 is a binding site for Ca(2+). 227-230 (NLYD) is a substrate binding site. D233 contacts Ca(2+). Residues 237-440 (NNSTIDTYFK…LRKSNPAIAY (204 aa)) form an A2 region. Substrate is bound at residue R261. D263 acts as the Nucleophile in catalysis. 266–267 (KH) lines the substrate pocket. Position 267 (H267) interacts with Ca(2+). E291 acts as the Proton donor in catalysis. H361, D405, and R409 together coordinate substrate. The interval 441-528 (GSTQQRWINN…ATAVWQYTAS (88 aa)) is c. The d stretch occupies residues 529–614 (ETTPTIGHVG…SNAYNDFTIL (86 aa)). Residues 532-612 (PTIGHVGPVM…VNSNAYNDFT (81 aa)) enclose the IPT/TIG domain. In terms of domain architecture, CBM20 spans 613–718 (ILSGDQVSVR…GTATVTINWQ (106 aa)). Residues 615-718 (SGDQVSVRFV…GTATVTINWQ (104 aa)) form an e region.

The protein belongs to the glycosyl hydrolase 13 family. Monomer. The cofactor is Ca(2+).

Its subcellular location is the secreted. The catalysed reaction is Cyclizes part of a (1-&gt;4)-alpha-D-glucan chain by formation of a (1-&gt;4)-alpha-D-glucosidic bond.. In Bacillus licheniformis, this protein is Cyclomaltodextrin glucanotransferase (cgtA).